A 244-amino-acid chain; its full sequence is tRNA (guanine-N(7)-)-methyltransferase (244 aa).

Residues 1–11 (MTDTHVPPPEL) are compositionally biased toward pro residues. The tract at residues 1-23 (MTDTHVPPPELPAAEEGEERPHR) is disordered. Positions 74, 99, 126, and 149 each coordinate S-adenosyl-L-methionine. Residue Asp149 is part of the active site. Substrate contacts are provided by residues Lys153, Asp185, and 222–225 (TKFE).

It belongs to the class I-like SAM-binding methyltransferase superfamily. TrmB family.

The enzyme catalyses guanosine(46) in tRNA + S-adenosyl-L-methionine = N(7)-methylguanosine(46) in tRNA + S-adenosyl-L-homocysteine. It functions in the pathway tRNA modification; N(7)-methylguanine-tRNA biosynthesis. Catalyzes the formation of N(7)-methylguanine at position 46 (m7G46) in tRNA. In Pseudomonas syringae pv. tomato (strain ATCC BAA-871 / DC3000), this protein is tRNA (guanine-N(7)-)-methyltransferase.